Reading from the N-terminus, the 766-residue chain is U3 small nucleolar RNA-associated protein 14 homolog C (766 aa).

Residues 14 to 42 (HQEELVDLPKNYPLSENEDEGDSDGERKH) are disordered. Phosphoserine is present on residues serine 28, serine 51, serine 76, and serine 80. A Glycyl lysine isopeptide (Lys-Gly) (interchain with G-Cter in SUMO2) cross-link involves residue lysine 121. Phosphothreonine is present on threonine 204. Coiled-coil stretches lie at residues 216–245 (LEEA…KEKK) and 316–346 (LEAR…EEEE). The tract at residues 365 to 563 (MNVDGPNPWM…EQLINLQNFL (199 aa)) is disordered. Over residues 396–405 (ELAAHEVSAS) the composition is skewed to low complexity. 2 positions are modified to phosphoserine: serine 403 and serine 405. The span at 407–434 (AEERPVAEEEILLREFEERQSLRKRSEL) shows a compositional bias: basic and acidic residues. Position 443 is a phosphoserine (serine 443). A Glycyl lysine isopeptide (Lys-Gly) (interchain with G-Cter in SUMO2) cross-link involves residue lysine 447. Serine 451 carries the phosphoserine modification. A coiled-coil region spans residues 452 to 470 (QEVLSELRALSQKLKEKHQ). Over residues 466 to 475 (KEKHQSRKQK) the composition is skewed to basic residues. A compositionally biased stretch (basic and acidic residues) spans 502 to 527 (RSERVQTLEELEELGKEDCFQNKELP). Residue lysine 517 forms a Glycyl lysine isopeptide (Lys-Gly) (interchain with G-Cter in SUMO2) linkage. The segment covering 533–542 (GQQSERTPNN) has biased composition (polar residues). Residues 545–555 (DAPKEKKEKEQ) are compositionally biased toward basic and acidic residues. Serine 567 is modified (phosphoserine). A Glycyl lysine isopeptide (Lys-Gly) (interchain with G-Cter in SUMO2) cross-link involves residue lysine 732. A disordered region spans residues 734 to 766 (EDVGYQSSSRSDLPVIQRNPKRITTRHNKEEKL).

The protein belongs to the UTP14 family. As to expression, expressed in testis.

Its subcellular location is the nucleus. The protein localises to the nucleolus. Its function is as follows. Essential for spermatogenesis. May be required specifically for ribosome biogenesis and hence protein synthesis during male meiosis. This chain is U3 small nucleolar RNA-associated protein 14 homolog C (UTP14C), found in Homo sapiens (Human).